A 142-amino-acid polypeptide reads, in one-letter code: Large ribosomal subunit protein uL11 (142 aa).

This sequence belongs to the universal ribosomal protein uL11 family. As to quaternary structure, part of the ribosomal stalk of the 50S ribosomal subunit. Interacts with L10 and the large rRNA to form the base of the stalk. L10 forms an elongated spine to which L12 dimers bind in a sequential fashion forming a multimeric L10(L12)X complex. One or more lysine residues are methylated.

Its function is as follows. Forms part of the ribosomal stalk which helps the ribosome interact with GTP-bound translation factors. The chain is Large ribosomal subunit protein uL11 from Xanthomonas axonopodis pv. citri (strain 306).